Reading from the N-terminus, the 425-residue chain is Enolase (425 aa).

Residue Gln-163 coordinates (2R)-2-phosphoglycerate. Catalysis depends on Glu-205, which acts as the Proton donor. Residues Asp-242, Glu-286, and Asp-313 each coordinate Mg(2+). (2R)-2-phosphoglycerate is bound by residues Lys-338, Arg-367, Ser-368, and Lys-389. The active-site Proton acceptor is Lys-338.

Belongs to the enolase family. It depends on Mg(2+) as a cofactor.

Its subcellular location is the cytoplasm. It is found in the secreted. The protein resides in the cell surface. The enzyme catalyses (2R)-2-phosphoglycerate = phosphoenolpyruvate + H2O. The protein operates within carbohydrate degradation; glycolysis; pyruvate from D-glyceraldehyde 3-phosphate: step 4/5. Its function is as follows. Catalyzes the reversible conversion of 2-phosphoglycerate (2-PG) into phosphoenolpyruvate (PEP). It is essential for the degradation of carbohydrates via glycolysis. In Lactobacillus delbrueckii subsp. bulgaricus (strain ATCC 11842 / DSM 20081 / BCRC 10696 / JCM 1002 / NBRC 13953 / NCIMB 11778 / NCTC 12712 / WDCM 00102 / Lb 14), this protein is Enolase.